Consider the following 377-residue polypeptide: Glutamate 5-kinase (377 aa).

ATP is bound at residue Lys22. Residues Ser62, Asp149, and Asn161 each contribute to the substrate site. Residues 181–182 and 223–229 each bind ATP; these read TD and TGGMVTK. Positions 285–359 constitute a PUA domain; sequence QGTLVADSGA…GRNTAQLKRF (75 aa).

Belongs to the glutamate 5-kinase family.

Its subcellular location is the cytoplasm. The enzyme catalyses L-glutamate + ATP = L-glutamyl 5-phosphate + ADP. It functions in the pathway amino-acid biosynthesis; L-proline biosynthesis; L-glutamate 5-semialdehyde from L-glutamate: step 1/2. In terms of biological role, catalyzes the transfer of a phosphate group to glutamate to form L-glutamate 5-phosphate. This chain is Glutamate 5-kinase, found in Bifidobacterium adolescentis (strain ATCC 15703 / DSM 20083 / NCTC 11814 / E194a).